Consider the following 187-residue polypeptide: ATP synthase subunit delta (187 aa).

Belongs to the ATPase delta chain family. F-type ATPases have 2 components, F(1) - the catalytic core - and F(0) - the membrane proton channel. F(1) has five subunits: alpha(3), beta(3), gamma(1), delta(1), epsilon(1). F(0) has three main subunits: a(1), b(2) and c(10-14). The alpha and beta chains form an alternating ring which encloses part of the gamma chain. F(1) is attached to F(0) by a central stalk formed by the gamma and epsilon chains, while a peripheral stalk is formed by the delta and b chains.

Its subcellular location is the cell membrane. In terms of biological role, f(1)F(0) ATP synthase produces ATP from ADP in the presence of a proton or sodium gradient. F-type ATPases consist of two structural domains, F(1) containing the extramembraneous catalytic core and F(0) containing the membrane proton channel, linked together by a central stalk and a peripheral stalk. During catalysis, ATP synthesis in the catalytic domain of F(1) is coupled via a rotary mechanism of the central stalk subunits to proton translocation. Functionally, this protein is part of the stalk that links CF(0) to CF(1). It either transmits conformational changes from CF(0) to CF(1) or is implicated in proton conduction. This is ATP synthase subunit delta from Mesomycoplasma hyopneumoniae (strain J / ATCC 25934 / NCTC 10110) (Mycoplasma hyopneumoniae).